Reading from the N-terminus, the 661-residue chain is CD180 antigen (661 aa).

The signal sequence occupies residues 1-20 (MAPDISCFFLVALFLASCRA). At 21 to 626 (TTSSDQKCIE…RLSDVTLSCS (606 aa)) the chain is on the extracellular side. An LRRNT domain is found at 33-53 (VNKTYNCENLGLNEIPGTLPN). Residues N34, N53, N70, and N78 are each glycosylated (N-linked (GlcNAc...) asparagine). LRR repeat units lie at residues 54 to 75 (STEC…TFSR), 78 to 99 (NLTF…TFQS), 102 to 123 (RLDT…ALSG), 126 to 147 (ALKH…PLHN), 150 to 171 (TLES…KGFP), 174 to 195 (KLKV…DMSS), and 201 to 221 (NLSL…AFDS). N-linked (GlcNAc...) asparagine glycosylation is found at N201, N244, and N288. LRR repeat units follow at residues 275–296 (SVES…TFHC), 299–321 (GLQE…VGLS), 322–343 (TLKK…SASN), 346–366 (SLTH…TGCL), and 371–391 (NLRE…CNLQ). N-linked (GlcNAc...) asparagine glycosylation is found at N394 and N402. LRR repeat units lie at residues 397–418 (HLQS…AFKE), 421–442 (QLEL…SPFQ), 446–466 (LLKV…QLFD), 470–493 (ALQH…NSLQ), 497–518 (RLEI…AFTS), 521–544 (MMNH…SHLK), and 546–566 (IYLN…LPIL). N451 carries N-linked (GlcNAc...) asparagine glycosylation. The region spanning 577–627 (NPLDCTCSNIYFLEWYKENMQKLEDTEDTLCENPPLLRGVRLSDVTLSCSM) is the LRRCT domain. A helical membrane pass occupies residues 627–650 (MAAVGIFFLIVFLLVFAILLIFAV). Residues 651-661 (KYFLRWKYQHI) lie on the Cytoplasmic side of the membrane.

It belongs to the Toll-like receptor family. As to quaternary structure, M-shaped tetramer of two CD180-LY86 heterodimers. In terms of tissue distribution, B-lymphocytes and spleen. Not detected in thymus, kidney, muscle, heart, brain or liver.

The protein resides in the cell membrane. Its function is as follows. May cooperate with MD-1 and TLR4 to mediate the innate immune response to bacterial lipopolysaccharide (LPS) in B-cells. Leads to NF-kappa-B activation. Also involved in the life/death decision of B-cells. This Mus musculus (Mouse) protein is CD180 antigen (Cd180).